We begin with the raw amino-acid sequence, 88 residues long: MFGQRQSMIVYLHSLKHAKILRKYGNIHYISKRLKYAVVYCDMEQIEHMMHKLNKLPFVKKIEQSYRPYLKTEFENSRPDRAKEYDYS.

This sequence belongs to the UPF0298 family.

It localises to the cytoplasm. This chain is UPF0298 protein BC_3932, found in Bacillus cereus (strain ATCC 14579 / DSM 31 / CCUG 7414 / JCM 2152 / NBRC 15305 / NCIMB 9373 / NCTC 2599 / NRRL B-3711).